Here is a 649-residue protein sequence, read N- to C-terminus: MSEKVIDVQDAWRDRALIDEAKYKEMYEASVSGPETFWGEHGKRIDWSTPFSKVKNTSFAPGDVSIKWFEDGKTNVALNCIDRHLATRGDQTAIIWEGDDPNESKHITYRQLHAEVCRMANVLRNRGVGKGDRVTLYLPMIPEAAYAMLACARLGAIHAIVFGGFSPDSLASRIKGCGSKLVITADEGLRGGRKVPLKANVDEAIKRLDKDLVDHVIVVKRTGGNVAMEPGRDVYYHEAAEQVTDECPAEAVEAEHPLFILYTSGSTGQPKGVVHTTGGYLVYASMTHQYVFDYHDGDVYWCTADVGWVTGHSYIVYGPLANGATTLMFEGIPTYPSNSRFWEVIDKHNVNIFYTAPTAIRSLMGGGEGPVKKTSRQSLRVLGSVGEPINPEAWDWYYRVVGDSRCPIVDTWWQTETGGILITPLPGATRLKPGSATLPFFGVQPVMVDAEGKILDGACEGNLCIKDSWPGQMRTVYGDHERFEQTYFSTYKDLYFTGDGARRDADGYYWITGRVDDVINVSGHRMGTAEVESSLVAHPKVSEAAVVGYPHNVKGQGIYAYVTLNEGEEGTDELRKELVTWVRKDIGPIASPDLLQFAPGLPKTRSGKIMRRILRKIAEDDFGSLGDTSTLAEPAVVDDLIENRQNRSA.

Residues 190–193 and threonine 310 each bind CoA; that span reads RGGR. ATP-binding positions include 386 to 388, 410 to 415, aspartate 499, and arginine 514; these read GEP and DTWWQT. A CoA-binding site is contributed by serine 522. An ATP-binding site is contributed by arginine 525. The Mg(2+) site is built by valine 536, histidine 538, and valine 541. A CoA-binding site is contributed by arginine 583. The residue at position 608 (lysine 608) is an N6-acetyllysine.

The protein belongs to the ATP-dependent AMP-binding enzyme family. Requires Mg(2+) as cofactor. Post-translationally, acetylated. Deacetylation by the SIR2-homolog deacetylase activates the enzyme.

The enzyme catalyses acetate + ATP + CoA = acetyl-CoA + AMP + diphosphate. Functionally, catalyzes the conversion of acetate into acetyl-CoA (AcCoA), an essential intermediate at the junction of anabolic and catabolic pathways. AcsA undergoes a two-step reaction. In the first half reaction, AcsA combines acetate with ATP to form acetyl-adenylate (AcAMP) intermediate. In the second half reaction, it can then transfer the acetyl group from AcAMP to the sulfhydryl group of CoA, forming the product AcCoA. This chain is Acetyl-coenzyme A synthetase, found in Methylorubrum extorquens (strain PA1) (Methylobacterium extorquens).